A 110-amino-acid chain; its full sequence is MKHCFLILFTLIVFTVVWSLEENEEYPDEDEMIESFMDGYSYRGDDGTCILKGDHCHGTCDCCGWTTTCRKSKSAGGKICKSEGSSISAFNAIAKGVAAMKKAKCKHKSG.

The first 19 residues, 1-19 (MKHCFLILFTLIVFTVVWS), serve as a signal peptide directing secretion. A propeptide spanning residues 20-43 (LEENEEYPDEDEMIESFMDGYSYR) is cleaved from the precursor. Intrachain disulfides connect cysteine 49–cysteine 63, cysteine 56–cysteine 69, cysteine 60–cysteine 105, and cysteine 62–cysteine 80.

It belongs to the neurotoxin 03 (Tx2) family. 02 subfamily. As to expression, expressed by the venom gland.

The protein resides in the secreted. In terms of biological role, probable ion channel inhibitor. This Chilobrachys guangxiensis (Chinese earth tiger tarantula) protein is U32-theraphotoxin-Cg1a.